Reading from the N-terminus, the 256-residue chain is Alcohol dehydrogenase (256 aa).

12–35 (FVAGLGGIGLDTSKELVKRDLKNL) contacts NAD(+). Residue S140 participates in substrate binding. Catalysis depends on Y153, which acts as the Proton acceptor.

Belongs to the short-chain dehydrogenases/reductases (SDR) family. As to quaternary structure, homodimer.

The catalysed reaction is a primary alcohol + NAD(+) = an aldehyde + NADH + H(+). The enzyme catalyses a secondary alcohol + NAD(+) = a ketone + NADH + H(+). The sequence is that of Alcohol dehydrogenase (Adh) from Drosophila mauritiana (Fruit fly).